Consider the following 123-residue polypeptide: MQRSQRLRSPRDFRRVREGGRTWSHPLLVLSVAPARANRVRCGIVVRKSLGTAVERNRYKRQVREATRLVYDQIRPGWDVIFIVRAGFRTAAWEQIQQAVSRLLQQAQLWHDREQPSQEDRHG.

Belongs to the RnpA family. In terms of assembly, consists of a catalytic RNA component (M1 or rnpB) and a protein subunit.

It carries out the reaction Endonucleolytic cleavage of RNA, removing 5'-extranucleotides from tRNA precursor.. RNaseP catalyzes the removal of the 5'-leader sequence from pre-tRNA to produce the mature 5'-terminus. It can also cleave other RNA substrates such as 4.5S RNA. The protein component plays an auxiliary but essential role in vivo by binding to the 5'-leader sequence and broadening the substrate specificity of the ribozyme. This Herpetosiphon aurantiacus (strain ATCC 23779 / DSM 785 / 114-95) protein is Ribonuclease P protein component.